Consider the following 339-residue polypeptide: Protein H339R (339 aa).

It belongs to the asfivirus H339R family. In terms of assembly, interacts with NACA (alpha chain of nascent polypeptide-associated complex).

It is found in the host cytoplasm. Its subcellular location is the host nucleus. The protein localises to the virion. This chain is Protein H339R, found in African swine fever virus (isolate Warthog/Namibia/Wart80/1980) (ASFV).